We begin with the raw amino-acid sequence, 600 residues long: Chaperonin 60 subunit beta 1, chloroplastic (600 aa).

Residues 1–12 are compositionally biased toward polar residues; sequence MASTFTATSSIG. The interval 1–23 is disordered; it reads MASTFTATSSIGSMVAPNGHKSD. The transit peptide at 1 to 54 directs the protein to the chloroplast; it reads MASTFTATSSIGSMVAPNGHKSDKKLISKLSSSSFGRRQSVCPRPRRSSSAIVC. Residues Ser-101 and Ser-478 each carry the phosphoserine modification.

Belongs to the chaperonin (HSP60) family. Part of the Cpn60 complex composed of 7 alpha and 7 beta subunits. Can also form a complex composed of 14 beta subunits only. Both complexes show ATPase activity. The Cpn60 complex interacts with the Cpn10 complex. Interacts with RAB during heat stress. In terms of tissue distribution, expressed in leaves, stems, petioles and flowers.

It is found in the plastid. It localises to the chloroplast stroma. Binds RuBisCO small and large subunits and is implicated in the assembly of the enzyme oligomer. Involved in protein assisted folding. Required for proper plastid division. The chain is Chaperonin 60 subunit beta 1, chloroplastic (CPN60B1) from Arabidopsis thaliana (Mouse-ear cress).